The chain runs to 445 residues: Response regulator protein PilR (445 aa).

The region spanning 5-119 (KALIVDDEPD…RLRELVATAL (115 aa)) is the Response regulatory domain. Residues aspartate 11 and aspartate 54 each carry the 4-aspartylphosphate modification. A Sigma-54 factor interaction domain is found at 135-364 (LLGESPPMRA…LENMLERAYT (230 aa)). Residues 163-170 (GESGSGKE) and 226-235 (ASGGTLFLDE) each bind ATP. Residues 418–437 (RWNRTAAAQRLGLTFRSMRY) constitute a DNA-binding region (H-T-H motif).

Phosphorylated by PilS.

It is found in the cytoplasm. Functionally, member of the two-component regulatory system PilS/PilR that regulates the expression of multiple genes including the type IV pilus (T4P) major subunit PilA. Thereby, plays a major role in the regulation of multiple motility pathways. Upon appropriate environmental signals, the histidine kinase PilS transfers the phosphoryl group onto PilR. In turn, PilR functions as a transcriptional activator by direct binding to a cis-acting sequence upstream of the pilin gene promoter leading to its activation. The chain is Response regulator protein PilR (pilR) from Pseudomonas aeruginosa (strain ATCC 15692 / DSM 22644 / CIP 104116 / JCM 14847 / LMG 12228 / 1C / PRS 101 / PAO1).